Reading from the N-terminus, the 75-residue chain is MVRRYTSHSFQAQKCSWEHSNSTHWLSEFTRFRRRKWNLNIWRKQCDRGTWVLKQLHGQLAKSMKSRLHLQLSLD.

This is an uncharacterized protein from Equus caballus (Horse).